Consider the following 328-residue polypeptide: Probable GDP-L-fucose synthase 1 (328 aa).

25–31 (GHRGLVG) is a binding site for NADP(+). Tyr152 (proton donor/acceptor) is an active-site residue. NADP(+) is bound by residues Lys156, 179–182 (PTNL), and His195. 4 residues coordinate substrate: Arg203, Trp218, Arg225, and Asp285.

The protein belongs to the NAD(P)-dependent epimerase/dehydratase family. Fucose synthase subfamily. In terms of assembly, homodimer.

It catalyses the reaction GDP-beta-L-fucose + NADP(+) = GDP-4-dehydro-alpha-D-rhamnose + NADPH + H(+). It functions in the pathway nucleotide-sugar biosynthesis; GDP-L-fucose biosynthesis via de novo pathway; GDP-L-fucose from GDP-alpha-D-mannose: step 2/2. Functionally, catalyzes the two-step NADP-dependent conversion of GDP-4-dehydro-6-deoxy-D-mannose to GDP-fucose, involving an epimerase and a reductase reaction. The protein is Probable GDP-L-fucose synthase 1 of Oryza sativa subsp. japonica (Rice).